The sequence spans 332 residues: Adenosine receptor A2b (332 aa).

The Extracellular segment spans residues Met1–Ala8. The chain crosses the membrane as a helical span at residues Leu9–Gly33. At Ala34–Asn43 the chain is on the cytoplasmic side. The helical transmembrane segment at Tyr44–Ile67 threads the bilayer. Over Ser68 to Cys78 the chain is Extracellular. A disulfide bond links Cys78 and Cys171. The chain crosses the membrane as a helical span at residues Leu79–Val101. Topologically, residues Asp102–Arg121 are cytoplasmic. The helical transmembrane segment at Ala122 to Trp144 threads the bilayer. Residues Asn145–Pro178 are Extracellular-facing. Asn153 and Asn163 each carry an N-linked (GlcNAc...) asparagine glycan. Glu174 provides a ligand contact to adenosine. The chain crosses the membrane as a helical span at residues Met179–Ile203. The Cytoplasmic segment spans residues Lys204 to Ser235. A helical transmembrane segment spans residues Leu236–Phe259. Residue Asn254 participates in adenosine binding. Over His260–Lys267 the chain is Extracellular. Residues Pro268–Ala291 form a helical membrane-spanning segment. Adenosine-binding residues include Ser279 and His280. At Tyr292–Leu332 the chain is on the cytoplasmic side. A lipid anchor (S-palmitoyl cysteine) is attached at Cys311.

This sequence belongs to the G-protein coupled receptor 1 family.

It localises to the cell membrane. Its function is as follows. Receptor for adenosine. The activity of this receptor is mediated by G proteins which activate adenylyl cyclase. This Mus musculus (Mouse) protein is Adenosine receptor A2b (Adora2b).